Reading from the N-terminus, the 84-residue chain is Omega-conotoxin-like ArMKLT1-02 (84 aa).

A signal peptide spans 1-22 (MKVTCMMIVAVLFLTAWTFVTA). Residues 23-51 (DDSISALEDLFAKAHDKMENSEASPLNER) constitute a propeptide that is removed on maturation. 3 disulfides stabilise this stretch: C53/C71, C60/C75, and C70/C79.

It belongs to the conotoxin O1 superfamily. Expressed by the venom duct.

The protein localises to the secreted. In terms of biological role, omega-conotoxins act at presynaptic membranes, they bind and block voltage-gated calcium channels (Cav). The sequence is that of Omega-conotoxin-like ArMKLT1-02 from Conus arenatus (Sand-dusted cone).